Here is a 222-residue protein sequence, read N- to C-terminus: Protein-L-isoaspartate O-methyltransferase (222 aa).

Ser-70 is a catalytic residue.

Belongs to the methyltransferase superfamily. L-isoaspartyl/D-aspartyl protein methyltransferase family.

It localises to the cytoplasm. It catalyses the reaction [protein]-L-isoaspartate + S-adenosyl-L-methionine = [protein]-L-isoaspartate alpha-methyl ester + S-adenosyl-L-homocysteine. Catalyzes the methyl esterification of L-isoaspartyl residues in peptides and proteins that result from spontaneous decomposition of normal L-aspartyl and L-asparaginyl residues. It plays a role in the repair and/or degradation of damaged proteins. This Jannaschia sp. (strain CCS1) protein is Protein-L-isoaspartate O-methyltransferase.